The primary structure comprises 367 residues: DNA replication and repair protein RecF (367 aa).

30-37 contributes to the ATP binding site; it reads GANGSGKT.

Belongs to the RecF family.

Its subcellular location is the cytoplasm. Functionally, the RecF protein is involved in DNA metabolism; it is required for DNA replication and normal SOS inducibility. RecF binds preferentially to single-stranded, linear DNA. It also seems to bind ATP. The sequence is that of DNA replication and repair protein RecF from Pseudomonas entomophila (strain L48).